A 137-amino-acid polypeptide reads, in one-letter code: Large ribosomal subunit protein uL16 (137 aa).

This sequence belongs to the universal ribosomal protein uL16 family. In terms of assembly, part of the 50S ribosomal subunit.

Functionally, binds 23S rRNA and is also seen to make contacts with the A and possibly P site tRNAs. This chain is Large ribosomal subunit protein uL16, found in Allorhizobium ampelinum (strain ATCC BAA-846 / DSM 112012 / S4) (Agrobacterium vitis (strain S4)).